Here is a 61-residue protein sequence, read N- to C-terminus: Small ribosomal subunit protein uS14 (61 aa).

C24, C27, C40, and C43 together coordinate Zn(2+).

It belongs to the universal ribosomal protein uS14 family. Zinc-binding uS14 subfamily. Part of the 30S ribosomal subunit. Contacts proteins S3 and S10. Zn(2+) is required as a cofactor.

Binds 16S rRNA, required for the assembly of 30S particles and may also be responsible for determining the conformation of the 16S rRNA at the A site. In Carboxydothermus hydrogenoformans (strain ATCC BAA-161 / DSM 6008 / Z-2901), this protein is Small ribosomal subunit protein uS14.